Here is a 468-residue protein sequence, read N- to C-terminus: 3-isopropylmalate dehydratase large subunit (468 aa).

Residues Cys347, Cys407, and Cys410 each coordinate [4Fe-4S] cluster.

The protein belongs to the aconitase/IPM isomerase family. LeuC type 1 subfamily. Heterodimer of LeuC and LeuD. It depends on [4Fe-4S] cluster as a cofactor.

The enzyme catalyses (2R,3S)-3-isopropylmalate = (2S)-2-isopropylmalate. Its pathway is amino-acid biosynthesis; L-leucine biosynthesis; L-leucine from 3-methyl-2-oxobutanoate: step 2/4. Functionally, catalyzes the isomerization between 2-isopropylmalate and 3-isopropylmalate, via the formation of 2-isopropylmaleate. This is 3-isopropylmalate dehydratase large subunit from Prochlorococcus marinus (strain SARG / CCMP1375 / SS120).